Consider the following 174-residue polypeptide: Interferon gamma (174 aa).

A signal peptide spans 1–23; that stretch reads MHTTRCILALLLCLTQAMSGCYC. Gln-24 carries the pyrrolidone carboxylic acid modification. N-linked (GlcNAc...) asparagine glycans are attached at residues Asn-39 and Asn-106.

Belongs to the type II (or gamma) interferon family. Homodimer. Interacts with IFNGR1 (via extracellular domain); this interaction promotes IFNGR1 dimerization. In terms of tissue distribution, released primarily from activated T lymphocytes.

It localises to the secreted. Functionally, type II interferon produced by immune cells such as T-cells and NK cells that plays crucial roles in antimicrobial, antiviral, and antitumor responses by activating effector immune cells and enhancing antigen presentation. Primarily signals through the JAK-STAT pathway after interaction with its receptor IFNGR1 to affect gene regulation. Upon IFNG binding, IFNGR1 intracellular domain opens out to allow association of downstream signaling components JAK2, JAK1 and STAT1, leading to STAT1 activation, nuclear translocation and transcription of IFNG-regulated genes. Many of the induced genes are transcription factors such as IRF1 that are able to further drive regulation of a next wave of transcription. Plays a role in class I antigen presentation pathway by inducing a replacement of catalytic proteasome subunits with immunoproteasome subunits. In turn, increases the quantity, quality, and repertoire of peptides for class I MHC loading. Increases the efficiency of peptide generation also by inducing the expression of activator PA28 that associates with the proteasome and alters its proteolytic cleavage preference. Up-regulates as well MHC II complexes on the cell surface by promoting expression of several key molecules such as cathepsins B/CTSB, H/CTSH, and L/CTSL. Participates in the regulation of hematopoietic stem cells during development and under homeostatic conditions by affecting their development, quiescence, and differentiation. The polypeptide is Interferon gamma (IFNG) (Mesocricetus auratus (Golden hamster)).